A 315-amino-acid polypeptide reads, in one-letter code: Acetyl-coenzyme A carboxylase carboxyl transferase subunit alpha (315 aa).

One can recognise a CoA carboxyltransferase C-terminal domain in the interval 32 to 289; the sequence is EIDLLEASLE…KQAFVDQLEQ (258 aa).

Belongs to the AccA family. In terms of assembly, acetyl-CoA carboxylase is a heterohexamer composed of biotin carboxyl carrier protein (AccB), biotin carboxylase (AccC) and two subunits each of ACCase subunit alpha (AccA) and ACCase subunit beta (AccD).

The protein resides in the cytoplasm. It carries out the reaction N(6)-carboxybiotinyl-L-lysyl-[protein] + acetyl-CoA = N(6)-biotinyl-L-lysyl-[protein] + malonyl-CoA. It functions in the pathway lipid metabolism; malonyl-CoA biosynthesis; malonyl-CoA from acetyl-CoA: step 1/1. In terms of biological role, component of the acetyl coenzyme A carboxylase (ACC) complex. First, biotin carboxylase catalyzes the carboxylation of biotin on its carrier protein (BCCP) and then the CO(2) group is transferred by the carboxyltransferase to acetyl-CoA to form malonyl-CoA. The protein is Acetyl-coenzyme A carboxylase carboxyl transferase subunit alpha of Staphylococcus haemolyticus (strain JCSC1435).